A 263-amino-acid chain; its full sequence is MARIVMLGACGKMGREISKNLLMHSEHELVGFVDVVNVGQDFGEILGISRLGKTVEDNLKEVILKTNPEIVLDFSRASGAFTNILIALENKVRVVSGTTGFSQEQIKKIEDVSNANNLGCIIAPNFSIGALLLMKLAQMAAKYFSHVEIIEYHHNLKVDAPSGTAIKTAELLSSIRENQPSAIQEEEKIPGSRGGDYRGIKIHSVRLPGLVAHQEVIFGGRGQSLTLRHDVYSRESYLDGILFALKKVLELDRFVFGLDELLF.

NAD(+)-binding positions include 8–13, D34, 97–99, and 123–126; these read GACGKM, GTT, and APNF. Catalysis depends on H153, which acts as the Proton donor/acceptor. H154 is a binding site for (S)-2,3,4,5-tetrahydrodipicolinate. The Proton donor role is filled by K157. 163 to 164 is a (S)-2,3,4,5-tetrahydrodipicolinate binding site; it reads GT.

This sequence belongs to the DapB family.

It localises to the cytoplasm. It carries out the reaction (S)-2,3,4,5-tetrahydrodipicolinate + NAD(+) + H2O = (2S,4S)-4-hydroxy-2,3,4,5-tetrahydrodipicolinate + NADH + H(+). The enzyme catalyses (S)-2,3,4,5-tetrahydrodipicolinate + NADP(+) + H2O = (2S,4S)-4-hydroxy-2,3,4,5-tetrahydrodipicolinate + NADPH + H(+). Its pathway is amino-acid biosynthesis; L-lysine biosynthesis via DAP pathway; (S)-tetrahydrodipicolinate from L-aspartate: step 4/4. Catalyzes the conversion of 4-hydroxy-tetrahydrodipicolinate (HTPA) to tetrahydrodipicolinate. The chain is 4-hydroxy-tetrahydrodipicolinate reductase from Carboxydothermus hydrogenoformans (strain ATCC BAA-161 / DSM 6008 / Z-2901).